We begin with the raw amino-acid sequence, 167 residues long: Antibacterial peptide PMAP-37 (167 aa).

The signal sequence occupies residues 1–29 (METQRASLCLGRWSLWLLLLALVVPSASA). The propeptide occupies 30–130 (QALSYREAVL…DITCNEIQSV (101 aa)). Intrachain disulfides connect Cys85–Cys96 and Cys107–Cys124.

The protein belongs to the cathelicidin family.

It is found in the secreted. Functionally, exerts antimicrobial activity against both Gram-positive and negative bacteria with minimal inhibitory concentrations ranging over 1-4 micro molar. Its activity appears to be mediated by its ability to damage bacterial membranes. This Sus scrofa (Pig) protein is Antibacterial peptide PMAP-37 (PMAP37).